A 358-amino-acid chain; its full sequence is Glycerol-3-phosphate dehydrogenase [NAD(P)+] (358 aa).

4 residues coordinate NADPH: Ser-33, Phe-34, Arg-54, and Lys-128. Positions 128 and 156 each coordinate sn-glycerol 3-phosphate. Ala-160 provides a ligand contact to NADPH. 5 residues coordinate sn-glycerol 3-phosphate: Lys-211, Asp-264, Ser-274, Arg-275, and Asn-276. The active-site Proton acceptor is Lys-211. Arg-275 is a binding site for NADPH. Residues Val-299 and Glu-301 each coordinate NADPH.

The protein belongs to the NAD-dependent glycerol-3-phosphate dehydrogenase family.

The protein resides in the cytoplasm. It catalyses the reaction sn-glycerol 3-phosphate + NAD(+) = dihydroxyacetone phosphate + NADH + H(+). It carries out the reaction sn-glycerol 3-phosphate + NADP(+) = dihydroxyacetone phosphate + NADPH + H(+). Its pathway is membrane lipid metabolism; glycerophospholipid metabolism. In terms of biological role, catalyzes the reduction of the glycolytic intermediate dihydroxyacetone phosphate (DHAP) to sn-glycerol 3-phosphate (G3P), the key precursor for phospholipid synthesis. The sequence is that of Glycerol-3-phosphate dehydrogenase [NAD(P)+] from Saccharophagus degradans (strain 2-40 / ATCC 43961 / DSM 17024).